A 275-amino-acid chain; its full sequence is HUWE1-associated protein modifying stress responses (275 aa).

Residues 32 to 44 (AEQDEQLSPELQE) are compositionally biased toward acidic residues. 4 disordered regions span residues 32 to 51 (AEQD…AAAQ), 155 to 181 (RNSR…SSVE), 204 to 228 (SVRS…RRNG), and 250 to 275 (GTRK…NRML). Phosphoserine is present on serine 167. The segment covering 172–181 (TSTETSSSVE) has biased composition (low complexity). A compositionally biased stretch (polar residues) spans 204–221 (SVRSSTPGSPTHVSSGPN). Serine 212 carries the post-translational modification Phosphoserine.

This sequence belongs to the HAPSTR1 family. Homooligomer. Heterooligomer with HAPSTR2; the interaction is direct and stabilizes HAPSTR1. Interacts with HUWE1. In terms of processing, ubiquitinated by HUWE1. Promotes HAPSTR1 degradation through polyubiquitination.

The protein resides in the nucleus. It localises to the cytoplasm. Functionally, acts as a central player within a network of stress response pathways promoting cellular adaptability. The E3 ligase HUWE1 assists HAPSTR1 in controlling stress signaling and in turn, HUWE1 feeds back to promote the degradation of HAPSTR1. HAPSTR1 represents a central coordination mechanism for stress response programs. Functions as a negative regulator of TP53/P53 in the cellular response to telomere erosion and probably also DNA damage. May attenuate p53/TP53 activation through the E3 ubiquitin ligase HUWE1. This chain is HUWE1-associated protein modifying stress responses, found in Mus musculus (Mouse).